Reading from the N-terminus, the 317-residue chain is Apolipoprotein E (317 aa).

The first 18 residues, 1-18 (MKVLWAALLVTFLAGCQA), serve as a signal peptide directing secretion. Repeat copies occupy residues 80–101 (TLMDETMKELKAYKSELEEQLS), 102–123 (PVAEETRARLSKELQAAQARLG), 124–145 (ADMEDVRSRLVQYRSEVQAMLG), 146–167 (QSTEELRARLASHLRKLRKRLL), 168–189 (RDADDLQKRLAVYQAGAREGAE), 190–211 (RGVSAIRERLGPLVEQGRVRAA), 212–233 (TVGSLASQPLQERAQALGERLR), and 234–255 (ARMEEMGSRTRDRLDEVKEQVA). An 8 X 22 AA approximate tandem repeats region spans residues 80 to 255 (TLMDETMKEL…RLDEVKEQVA (176 aa)). Met-143 bears the Methionine sulfoxide mark. Ser-147 is modified (phosphoserine). The tract at residues 158 to 168 (HLRKLRKRLLR) is LDL and other lipoprotein receptors binding. A heparin-binding site is contributed by 162-165 (LRKR). A lipid-binding and lipoprotein association region spans residues 210 to 290 (AATVGSLASQ…SWFEPLVEDM (81 aa)). Residue 229-236 (GERLRARM) participates in heparin binding. A homooligomerization region spans residues 266–317 (QQISLQAEAFQARLKSWFEPLVEDMQRQWAGLVEKVQAAVGASTAPVPIDNH). The segment at 278–290 (RLKSWFEPLVEDM) is specificity for association with VLDL.

It belongs to the apolipoprotein A1/A4/E family. Homotetramer. May interact with ABCA1; functionally associated with ABCA1 in the biogenesis of HDLs. May interact with APP/A4 amyloid-beta peptide; the interaction is extremely stable in vitro but its physiological significance is unclear. May interact with MAPT. May interact with MAP2. In the cerebrospinal fluid, interacts with secreted SORL1. Interacts with PMEL; this allows the loading of PMEL luminal fragment on ILVs to induce fibril nucleation. Post-translationally, APOE exists as multiple glycosylated and sialylated glycoforms within cells and in plasma. The extent of glycosylation and sialylation are tissue and context specific. Glycated in plasma VLDL. In terms of processing, phosphorylated by FAM20C in the extracellular medium.

It is found in the secreted. The protein resides in the extracellular space. It localises to the extracellular matrix. The protein localises to the extracellular vesicle. Its subcellular location is the endosome. It is found in the multivesicular body. In terms of biological role, APOE is an apolipoprotein, a protein associating with lipid particles, that mainly functions in lipoprotein-mediated lipid transport between organs via the plasma and interstitial fluids. APOE is a core component of plasma lipoproteins and is involved in their production, conversion and clearance. Apolipoproteins are amphipathic molecules that interact both with lipids of the lipoprotein particle core and the aqueous environment of the plasma. As such, APOE associates with chylomicrons, chylomicron remnants, very low density lipoproteins (VLDL) and intermediate density lipoproteins (IDL) but shows a preferential binding to high-density lipoproteins (HDL). It also binds a wide range of cellular receptors including the LDL receptor/LDLR, the LDL receptor-related proteins LRP1, LRP2 and LRP8 and the very low-density lipoprotein receptor/VLDLR that mediate the cellular uptake of the APOE-containing lipoprotein particles. Finally, APOE also has a heparin-binding activity and binds heparan-sulfate proteoglycans on the surface of cells, a property that supports the capture and the receptor-mediated uptake of APOE-containing lipoproteins by cells. A main function of APOE is to mediate lipoprotein clearance through the uptake of chylomicrons, VLDLs, and HDLs by hepatocytes. APOE is also involved in the biosynthesis by the liver of VLDLs as well as their uptake by peripheral tissues ensuring the delivery of triglycerides and energy storage in muscle, heart and adipose tissues. By participating in the lipoprotein-mediated distribution of lipids among tissues, APOE plays a critical role in plasma and tissues lipid homeostasis. APOE is also involved in two steps of reverse cholesterol transport, the HDLs-mediated transport of cholesterol from peripheral tissues to the liver, and thereby plays an important role in cholesterol homeostasis. First, it is functionally associated with ABCA1 in the biogenesis of HDLs in tissues. Second, it is enriched in circulating HDLs and mediates their uptake by hepatocytes. APOE also plays an important role in lipid transport in the central nervous system, regulating neuron survival and sprouting. The chain is Apolipoprotein E (APOE) from Macaca fascicularis (Crab-eating macaque).